A 165-amino-acid chain; its full sequence is Mating factor alpha-1 (165 aa).

The or 20 signal peptide spans 1 to 19; that stretch reads MRFPSIFTAVLFAASSALA. Propeptides lie at residues 20 to 89, 105 to 110, 126 to 131, and 147 to 152; these read APVN…EAEA, EAEAEA, and EADAEA.

Functionally, the active factor is excreted into the culture medium by haploid cells of the alpha mating type and acts on cells of the opposite mating type (type A). It mediates the conjugation process between the two types by inhibiting the initiation of DNA synthesis in type a cells and synchronizing them with type alpha. This is Mating factor alpha-1 (MF(ALPHA)1) from Saccharomyces cerevisiae (strain ATCC 204508 / S288c) (Baker's yeast).